We begin with the raw amino-acid sequence, 449 residues long: Phosphoglucosamine mutase (449 aa).

Ser101 (phosphoserine intermediate) is an active-site residue. 4 residues coordinate Mg(2+): Ser101, Asp242, Asp244, and Asp246. Ser101 is subject to Phosphoserine.

It belongs to the phosphohexose mutase family. Mg(2+) is required as a cofactor. Post-translationally, activated by phosphorylation.

The catalysed reaction is alpha-D-glucosamine 1-phosphate = D-glucosamine 6-phosphate. In terms of biological role, catalyzes the conversion of glucosamine-6-phosphate to glucosamine-1-phosphate. The polypeptide is Phosphoglucosamine mutase (Bradyrhizobium sp. (strain ORS 278)).